We begin with the raw amino-acid sequence, 115 residues long: Large ribosomal subunit protein uL18 (115 aa).

The protein belongs to the universal ribosomal protein uL18 family. In terms of assembly, part of the 50S ribosomal subunit; part of the 5S rRNA/L5/L18/L25 subcomplex. Contacts the 5S and 23S rRNAs.

Functionally, this is one of the proteins that bind and probably mediate the attachment of the 5S RNA into the large ribosomal subunit, where it forms part of the central protuberance. The protein is Large ribosomal subunit protein uL18 of Marinobacter nauticus (strain ATCC 700491 / DSM 11845 / VT8) (Marinobacter aquaeolei).